The primary structure comprises 421 residues: Serine hydroxymethyltransferase (421 aa).

(6S)-5,6,7,8-tetrahydrofolate contacts are provided by residues Leu-121 and 125 to 127 (GHL). Lys-230 is subject to N6-(pyridoxal phosphate)lysine. 355 to 357 (SPF) contacts (6S)-5,6,7,8-tetrahydrofolate.

This sequence belongs to the SHMT family. Homodimer. It depends on pyridoxal 5'-phosphate as a cofactor.

It is found in the cytoplasm. The enzyme catalyses (6R)-5,10-methylene-5,6,7,8-tetrahydrofolate + glycine + H2O = (6S)-5,6,7,8-tetrahydrofolate + L-serine. The protein operates within one-carbon metabolism; tetrahydrofolate interconversion. It participates in amino-acid biosynthesis; glycine biosynthesis; glycine from L-serine: step 1/1. Catalyzes the reversible interconversion of serine and glycine with tetrahydrofolate (THF) serving as the one-carbon carrier. This reaction serves as the major source of one-carbon groups required for the biosynthesis of purines, thymidylate, methionine, and other important biomolecules. Also exhibits THF-independent aldolase activity toward beta-hydroxyamino acids, producing glycine and aldehydes, via a retro-aldol mechanism. The sequence is that of Serine hydroxymethyltransferase from Cellvibrio japonicus (strain Ueda107) (Pseudomonas fluorescens subsp. cellulosa).